Reading from the N-terminus, the 338-residue chain is D-erythrose-4-phosphate dehydrogenase (338 aa).

11 to 12 (RI) is an NAD(+) binding site. Residues 153–155 (SCT), R199, 212–213 (TK), and R235 contribute to the substrate site. Catalysis depends on C154, which acts as the Nucleophile. N317 serves as a coordination point for NAD(+).

Belongs to the glyceraldehyde-3-phosphate dehydrogenase family. Epd subfamily. In terms of assembly, homotetramer.

The protein resides in the cytoplasm. It catalyses the reaction D-erythrose 4-phosphate + NAD(+) + H2O = 4-phospho-D-erythronate + NADH + 2 H(+). Its pathway is cofactor biosynthesis; pyridoxine 5'-phosphate biosynthesis; pyridoxine 5'-phosphate from D-erythrose 4-phosphate: step 1/5. Its function is as follows. Catalyzes the NAD-dependent conversion of D-erythrose 4-phosphate to 4-phosphoerythronate. The polypeptide is D-erythrose-4-phosphate dehydrogenase (Shewanella sp. (strain MR-4)).